A 507-amino-acid polypeptide reads, in one-letter code: Arylsulfatase A (507 aa).

Positions 1-18 (MGAPRSLLLALAAGLAVA) are cleaved as a signal peptide. Residues Asp29, Asp30, and Cys69 each contribute to the Ca(2+) site. The active-site Nucleophile is the Cys69. A 3-oxoalanine (Cys) modification is found at Cys69. A substrate-binding site is contributed by Lys123. His125 is an active-site residue. Ser150 is a binding site for substrate. Intrachain disulfides connect Cys156–Cys172 and Cys161–Cys168. Residue Asn158 is glycosylated (N-linked (GlcNAc...) asparagine). N-linked (GlcNAc...) asparagine glycosylation is present at Asn184. His229 is a substrate binding site. Residues Asp281 and Asn282 each contribute to the Ca(2+) site. 4 disulfides stabilise this stretch: Cys300–Cys414, Cys488–Cys500, Cys489–Cys502, and Cys493–Cys499. Residue Lys302 participates in substrate binding. A glycan (N-linked (GlcNAc...) asparagine) is linked at Asn350.

Belongs to the sulfatase family. In terms of assembly, homodimer at neutral pH and homooctamer at acidic pH. Exists both as a single chain of 58 kDa (component A) or as a chain of 50 kDa (component B) linked by disulfide bond(s) to a 7 kDa chain (component C). Interacts with SUMF1. The cofactor is Ca(2+). The conversion to 3-oxoalanine (also known as C-formylglycine, FGly), of a serine or cysteine residue in prokaryotes and of a cysteine residue in eukaryotes, is critical for catalytic activity. This post-translational modification is severely defective in multiple sulfatase deficiency (MSD).

Its subcellular location is the endoplasmic reticulum. The protein localises to the lysosome. The catalysed reaction is an N-acyl-1-beta-D-(3-O-sulfo)-galactosyl-sphing-4-enine + H2O = a beta-D-galactosyl-(1&lt;-&gt;1')-N-acylsphing-4-enine + sulfate + H(+). Inhibited by phosphate. The phosphate forms a covalent bond with the active site 3-oxoalanine. Hydrolyzes cerebroside sulfate. The sequence is that of Arylsulfatase A (ARSA) from Homo sapiens (Human).